Here is a 306-residue protein sequence, read N- to C-terminus: Glutathione transport system permease protein GsiC (306 aa).

Over 1–8 (MLNYVIKR) the chain is Cytoplasmic. The chain crosses the membrane as a helical span at residues 9–29 (LLGLIPTLFIVSVLVFLFVHM). The Periplasmic segment spans residues 30–102 (LPGDPARLIA…SRFMPTLWLT (73 aa)). Positions 95-292 (FMPTLWLTIT…LEFILINLVV (198 aa)) constitute an ABC transmembrane type-1 domain. The chain crosses the membrane as a helical span at residues 103-123 (ITSMVWAVIFGMAAGIIAAVW). Residues 124 to 134 (RNRWPDRLSMT) lie on the Cytoplasmic side of the membrane. A helical transmembrane segment spans residues 135–155 (IAVSGISFPAFALGMFLIQVF). At 156-168 (SVELGWLPTVGAD) the chain is on the periplasmic side. A helical membrane pass occupies residues 169-189 (SWQHYILPSLTLGAAVAAVMA). The Cytoplasmic portion of the chain corresponds to 190-228 (RFTRASFVDVLSEDYMRTARAKGVSETWVVLKHGLRNAM). The chain crosses the membrane as a helical span at residues 229-249 (IPVVTMMGLQFGFLLGGSIVV). At 250 to 277 (EKVFNWPGLGRLLVDSVEMRDYPVIQAE) the chain is on the periplasmic side. Residues 278 to 298 (ILLFSLEFILINLVVDVLYAA) form a helical membrane-spanning segment. At 299–306 (INPAIRYK) the chain is on the cytoplasmic side.

Belongs to the binding-protein-dependent transport system permease family. As to quaternary structure, the complex is composed of two ATP-binding proteins (GsiA), two transmembrane proteins (GsiC and GsiD) and a solute-binding protein (GsiB).

It localises to the cell inner membrane. Its function is as follows. Part of the ABC transporter complex GsiABCD involved in glutathione import. Probably responsible for the translocation of the substrate across the membrane. The protein is Glutathione transport system permease protein GsiC of Shigella flexneri serotype 5b (strain 8401).